Reading from the N-terminus, the 552-residue chain is Probable bifunctional methylthioribose-1-phosphate isomerase/methylthioribulose-1-phosphate dehydratase (552 aa).

Residues 1-333 form a methylthioribose-1-phosphate isomerase activity region; it reads MRPIDDSSLT…VVTEHGVVHG (333 aa). Residues 49–51, Arg-91, and Gln-195 contribute to the substrate site; that span reads RGA. Asp-236 serves as the catalytic Proton donor. 246–247 provides a ligand contact to substrate; sequence NK. The tract at residues 334-535 is methylthioribulose-1-phosphate dehydratase activity; that stretch reads TVAAEPGARI…AVCELVLRTG (202 aa). Positions 427 and 429 each coordinate Zn(2+).

This sequence in the N-terminal section; belongs to the eIF-2B alpha/beta/delta subunits family. MtnA subfamily. In the C-terminal section; belongs to the aldolase class II family. MtnB subfamily. Requires Zn(2+) as cofactor.

The enzyme catalyses 5-(methylsulfanyl)-alpha-D-ribose 1-phosphate = 5-(methylsulfanyl)-D-ribulose 1-phosphate. It carries out the reaction 5-(methylsulfanyl)-D-ribulose 1-phosphate = 5-methylsulfanyl-2,3-dioxopentyl phosphate + H2O. Its pathway is amino-acid biosynthesis; L-methionine biosynthesis via salvage pathway; L-methionine from S-methyl-5-thio-alpha-D-ribose 1-phosphate: step 1/6. It functions in the pathway amino-acid biosynthesis; L-methionine biosynthesis via salvage pathway; L-methionine from S-methyl-5-thio-alpha-D-ribose 1-phosphate: step 2/6. Functionally, bifunctional protein that catalyzes the interconversion of methylthioribose-1-phosphate (MTR-1-P) into methylthioribulose-1-phosphate (MTRu-1-P), and the dehydration of methylthioribulose-1-phosphate (MTRu-1-P) into 2,3-diketo-5-methylthiopentyl-1-phosphate (DK-MTP-1-P). The sequence is that of Probable bifunctional methylthioribose-1-phosphate isomerase/methylthioribulose-1-phosphate dehydratase (mtnAB) from Nocardia farcinica (strain IFM 10152).